The chain runs to 267 residues: Pyrroline-5-carboxylate reductase (267 aa).

The protein belongs to the pyrroline-5-carboxylate reductase family.

The protein resides in the cytoplasm. The enzyme catalyses L-proline + NADP(+) = (S)-1-pyrroline-5-carboxylate + NADPH + 2 H(+). It catalyses the reaction L-proline + NAD(+) = (S)-1-pyrroline-5-carboxylate + NADH + 2 H(+). It participates in amino-acid biosynthesis; L-proline biosynthesis; L-proline from L-glutamate 5-semialdehyde: step 1/1. In terms of biological role, catalyzes the reduction of 1-pyrroline-5-carboxylate (PCA) to L-proline. This Synechocystis sp. (strain ATCC 27184 / PCC 6803 / Kazusa) protein is Pyrroline-5-carboxylate reductase.